The chain runs to 326 residues: MSAIRVGIVGYGNLGRGVEFAISQNPDMELVAVFTRRDPSTVSVASNASVYLVDDAEKFQDDIDVMILCGGSATDLPEQGPHFAQWFNTIDSFDTHAKIPEFFDAVDAAAQKSGKVSVISVGWDPGLFSLNRVLGEAVLPVGTTYTFWGDGLSQGHSDAVRRIEGVKNAVQYTLPIKDAVERVRNGENPELTTREKHARECWVVLEEGADAPKVEQEIVTMPNYFDEYNTTVNFISEDEFNANHTGMPHGGFVIRSGESGANDKQILEFSLKLESNPNFTSSVLVAYARAAHRLSQAGEKGAKTVFDIPFGLLSPKSAAQLRKELL.

NADP(+) contacts are provided by residues 11–14 (YGNL), 35–37 (TRR), 69–72 (CGGS), 92–94 (SFD), and 121–125 (VGWDP). Substrate-binding positions include Asp94, Asp124, Trp148, 154–155 (QG), Thr173, Arg199, His249, and Asn276.

The protein belongs to the diaminopimelate dehydrogenase family. In terms of assembly, homodimer.

The enzyme catalyses meso-2,6-diaminopimelate + NADP(+) + H2O = (S)-2-amino-6-oxoheptanedioate + NH4(+) + NADPH + H(+). It participates in amino-acid biosynthesis; L-lysine biosynthesis via DAP pathway; DL-2,6-diaminopimelate from (S)-tetrahydrodipicolinate: step 1/1. L,L-2,6-diaminopimelate, D,D-2,6-diaminopimelate and meso-2,5-diaminoadipate competitively inhibit the oxidation of meso-2,6-diaminopimelate. L-2-amino-6-methylene-pimelate is also a potent competitive inhibitor (5 uM) of this reaction. Glyoxylate inhibits the reductive amination of L-2-amino-6-oxopimelate about 30%. The enzyme is inhibited completely by p-chloromercuribenzoate and HgCl(2) in vitro. Its function is as follows. Catalyzes the reversible NADPH-dependent reductive amination of L-2-amino-6-oxopimelate, the acyclic form of L-tetrahydrodipicolinate, to generate the meso compound, D,L-2,6-diaminopimelate. Probably plays a role in lysine biosynthesis. Exhibits a high substrate specificity, since alpha-ketoglutarate, pyruvate, oxaloacetate, glyoxylate, alpha-ketobutyrate, alpha-ketovalerate, alpha-ketocaproate, alpha-ketoisocaproate, alpha-ketoisovalerate, and phenylpyruvate are not substrates for the reductive amination reaction, and L,L-2,6-diaminopimelate, D,D-2,6-diaminopimelate, DL-alpha-aminopimelate, meso- and DL-2,5-diaminoadipate, L-djenkolate, L-cystine, L-lysine, S-(beta-aminoethy1)-L-homocysteine, L-ornithine, L-arginine, L-alpha,gamma-diaminobutyrate, L-histidine, L-phenylalanine, L-tyrosine, L-glutamate, L-aspartate, L-leucine, L-valine, L-methionine, L-serine, L-alanine, L-alpha-aminobutyrate, D-lysine, D-glutamate, D-leucine, D-alanine, D-phenylalanine, epsilon-aminocaproate, 7-aminoheptanoate, and 8-aminooctanoate are not substrates for the oxidative deamination reaction. Cannot use NAD(+) or NAD(+) analogs instead of NADP(+) for the oxidative deamination reaction. The protein is Meso-diaminopimelate D-dehydrogenase (dapdh) of Lysinibacillus sphaericus (Bacillus sphaericus).